The following is a 298-amino-acid chain: Triosephosphate isomerase, chloroplastic (298 aa).

Over residues methionine 1–proline 18 the composition is skewed to pro residues. A disordered region spans residues methionine 1–alanine 32. A chloroplast-targeting transit peptide spans methionine 1–methionine 43. The segment covering arginine 19 to alanine 32 has biased composition (low complexity). The substrate site is built by asparagine 54 and lysine 56. Histidine 138 serves as the catalytic Electrophile. Cysteine 186 is modified (cysteine derivative). Glutamate 208 (proton acceptor) is an active-site residue.

The protein belongs to the triosephosphate isomerase family. As to quaternary structure, homodimer.

It is found in the plastid. The protein localises to the chloroplast. The enzyme catalyses D-glyceraldehyde 3-phosphate = dihydroxyacetone phosphate. Its pathway is carbohydrate biosynthesis; Calvin cycle. The chain is Triosephosphate isomerase, chloroplastic from Secale cereale (Rye).